Here is a 30-residue protein sequence, read N- to C-terminus: Arsenate respiratory reductase iron-sulfur subunit ArrB (30 aa).

4 residues coordinate [4Fe-4S] cluster: Cys-12, Cys-15, Cys-18, and Cys-22.

In terms of assembly, heterodimer composed of one large subunit (ArrA) and one small subunit (ArrB). The cofactor is [4Fe-4S] cluster.

The protein localises to the periplasm. Functionally, component of the arsenate respiratory reductase (Arr) complex, which catalyzes the reduction of arsenate (As(V)) to arsenite (As(III)). ArrB is probably the electron transfer subunit. The protein is Arsenate respiratory reductase iron-sulfur subunit ArrB of Chrysiogenes arsenatis.